The primary structure comprises 279 residues: 2'-N-acetylparomamine deacetylase (279 aa).

3 residues coordinate Zn(2+): His31, Asp34, and His157. The interval 245-279 (PRRWTGGTAGAGHAAGRRGAPHTERVWTPAPAGAR) is disordered. Positions 246-258 (RRWTGGTAGAGHA) are enriched in low complexity.

It belongs to the PIGL family. It depends on Zn(2+) as a cofactor.

It catalyses the reaction 2'-N-acetylparomamine + H2O = paromamine + acetate. It carries out the reaction 2'''-acetyl-6'''-hydroxyneomycin C + H2O = 6'''-deamino-6'''-hydroxyneomycin C + acetate. It participates in antibiotic biosynthesis; neomycin biosynthesis. Deacetylase involved in the biosynthesis of neomycin by mediating 2 steps of the pathway. Deacetylates both 2'-N-acetylparomamine and 2'''-acetyl-6'''-hydroxyneomycin C. In Streptomyces fradiae (Streptomyces roseoflavus), this protein is 2'-N-acetylparomamine deacetylase (neoL).